Reading from the N-terminus, the 90-residue chain is Hemoglobin subunit alpha-1 (90 aa).

In terms of domain architecture, Globin spans 1–90 (VLTDDDKNHV…SKLSDLHAEK (90 aa)).

The protein belongs to the globin family. In terms of assembly, heterotetramer of two alpha chains and two beta chains. Red blood cells.

In terms of biological role, involved in oxygen transport from the lung to the various peripheral tissues. This chain is Hemoglobin subunit alpha-1, found in Saara hardwickii (Indian spiny-tailed lizard).